The chain runs to 238 residues: tRNA (guanine-N(1)-)-methyltransferase (238 aa).

Position 132 to 137 (132 to 137 (IGDYVL)) interacts with S-adenosyl-L-methionine.

Belongs to the RNA methyltransferase TrmD family. In terms of assembly, homodimer.

Its subcellular location is the cytoplasm. It carries out the reaction guanosine(37) in tRNA + S-adenosyl-L-methionine = N(1)-methylguanosine(37) in tRNA + S-adenosyl-L-homocysteine + H(+). Specifically methylates guanosine-37 in various tRNAs. The chain is tRNA (guanine-N(1)-)-methyltransferase from Nitrobacter hamburgensis (strain DSM 10229 / NCIMB 13809 / X14).